The following is an 869-amino-acid chain: Aconitate hydratase A (869 aa).

3 residues coordinate [4Fe-4S] cluster: C411, C477, and C480.

The protein belongs to the aconitase/IPM isomerase family. Monomer. It depends on [4Fe-4S] cluster as a cofactor.

The enzyme catalyses citrate = D-threo-isocitrate. The catalysed reaction is (2S,3R)-3-hydroxybutane-1,2,3-tricarboxylate = 2-methyl-cis-aconitate + H2O. The protein operates within carbohydrate metabolism; tricarboxylic acid cycle; isocitrate from oxaloacetate: step 2/2. Its pathway is organic acid metabolism; propanoate degradation. Functionally, involved in the catabolism of short chain fatty acids (SCFA) via the tricarboxylic acid (TCA)(acetyl degradation route) and the 2-methylcitrate cycle I (propionate degradation route). Catalyzes the reversible isomerization of citrate to isocitrate via cis-aconitate. Could catalyze the hydration of 2-methyl-cis-aconitate to yield (2S,3R)-2-methylisocitrate. The apo form of AcnA functions as a RNA-binding regulatory protein. The chain is Aconitate hydratase A from Cupriavidus necator (Alcaligenes eutrophus).